Reading from the N-terminus, the 614-residue chain is Major facilitator superfamily domain-containing protein 6-like protein B (614 aa).

The next 2 membrane-spanning stretches (helical) occupy residues 41–61 (LGLG…VHLL) and 78–98 (FFIM…AFYP). Positions 177 to 191 (HQRFTDQFPSSSPLT) are enriched in polar residues. The segment at 177–243 (HQRFTDQFPS…PFATHPNVSH (67 aa)) is disordered. The span at 205–227 (GSGKAQKANSSKSSASNSKQRSS) shows a compositional bias: low complexity. Transmembrane regions (helical) follow at residues 270–290 (IFLI…PLEW), 312–332 (LWIW…FLID), 345–365 (VSFH…LSTL), 393–413 (IVLT…IQNF), 425–445 (ELYM…LYFF), 457–477 (WMVV…SFLW), 480–500 (WSVV…WWAI), 520–540 (LRWL…GFII), and 546–566 (AVLY…FLLV).

It belongs to the major facilitator superfamily. MFSD6 family.

It localises to the membrane. The polypeptide is Major facilitator superfamily domain-containing protein 6-like protein B (mfsd6l-b) (Xenopus laevis (African clawed frog)).